The primary structure comprises 67 residues: Cold shock protein ScoF (67 aa).

Residues 4–64 (GTVKWFNSEK…GQKGPQAENI (61 aa)) enclose the CSD domain.

Its subcellular location is the cytoplasm. This Streptomyces coelicolor (strain ATCC BAA-471 / A3(2) / M145) protein is Cold shock protein ScoF (scoF).